The chain runs to 206 residues: MELKVTTLEGKDAGSVQLSDAIFGLEPRVDIIQRCVQWQLNKRQAGTHKAKGRAEIWRTGKKMYKQKGTGGARHGSARVPQFRGGGRAFGPVVRSHATDLPKKVRALALKHALSAKAKDGDLVVLENATLEAAKTKALIGHFSGLGLTNALIIDGAELHNGFAAAARNIPNLDVLPIQGINVYDILRRQKLVLTKAAIDALEARFK.

This sequence belongs to the universal ribosomal protein uL4 family. In terms of assembly, part of the 50S ribosomal subunit.

One of the primary rRNA binding proteins, this protein initially binds near the 5'-end of the 23S rRNA. It is important during the early stages of 50S assembly. It makes multiple contacts with different domains of the 23S rRNA in the assembled 50S subunit and ribosome. Its function is as follows. Forms part of the polypeptide exit tunnel. This is Large ribosomal subunit protein uL4 from Bradyrhizobium sp. (strain BTAi1 / ATCC BAA-1182).